Reading from the N-terminus, the 794-residue chain is Elongator complex protein 2 (794 aa).

WD repeat units follow at residues Glu-55–Ser-93, Gly-98–Phe-140, Asp-147–Gly-188, Gly-203–Met-244, Gly-286–Glu-328, Gly-337–Trp-376, Gly-384–Pro-423, Ile-433–Arg-472, Gly-557–Lys-601, Gly-604–Gln-643, Val-654–Ser-693, Leu-705–Leu-751, and Ala-759–Thr-794.

The protein belongs to the WD repeat ELP2 family. As to quaternary structure, component of the elongator complex composed of Elp1, Elp2, Elp3, Elp4, Elp5 and Elp6. The elongator complex associates with and stabilizes microtubules; efficient interaction requires the full complex.

The protein resides in the cytoplasm. It localises to the nucleus. Its subcellular location is the cytoskeleton. The protein localises to the spindle. Its pathway is tRNA modification; 5-methoxycarbonylmethyl-2-thiouridine-tRNA biosynthesis. Component of the elongator complex, which is required for multiple tRNA modifications, including mcm5U (5-methoxycarbonylmethyl uridine), mcm5s2U (5-methoxycarbonylmethyl-2-thiouridine), and ncm5U (5-carbamoylmethyl uridine). The elongator complex catalyzes the formation of carboxymethyluridine in the wobble base at position 34 in tRNAs. Binding by the elongator complex stabilizes microtubules and promotes their growth. This induces central spindle asymmetry, promoting polarized signaling endosome trafficking during asymmetric cell division and cell fate assignation of sensory organ precursor cells. Involved in the regulation of the STAT pathway. The sequence is that of Elongator complex protein 2 from Drosophila melanogaster (Fruit fly).